Here is a 458-residue protein sequence, read N- to C-terminus: Retinoic acid receptor alpha (458 aa).

The tract at residues Met-1–Pro-86 is modulating. Residues Thr-54–Glu-68 show a composition bias toward polar residues. The interval Thr-54–Ser-76 is disordered. 2 consecutive NR C4-type zinc fingers follow at residues Cys-87 to Cys-107 and Cys-123 to Cys-147. Residues Cys-87–Met-152 constitute a DNA-binding region (nuclear receptor). The interval Ser-153 to Pro-182 is hinge. Residues Glu-183–Ser-417 enclose the NR LBD domain. The short motif at Pro-408–Asn-416 is the 9aaTAD element. Positions Ser-417 to Pro-458 are disordered. Low complexity predominate over residues Cys-440–Pro-458.

Belongs to the nuclear hormone receptor family. NR1 subfamily. In terms of assembly, heterodimer; with an rxr molecule. Binds DNA preferentially as a rar/rxr heterodimer. Expressed in forelimb, in the distal forelimb blastema, kidney, liver and hindlimb blastemal mesenchymal cells.

Its subcellular location is the nucleus. In terms of biological role, receptor for retinoic acid. Retinoic acid receptors bind as heterodimers to their target response elements in response to their ligands, all-trans or 9-cis retinoic acid, and regulate gene expression in various biological processes. The rar/rxr heterodimers bind to the retinoic acid response elements (RARE) composed of tandem 5'-AGGTCA-3' sites known as DR1-DR5. Retinoic acid signaling appears to be involved in specifying proximal-distal axis in limb regeneration. The polypeptide is Retinoic acid receptor alpha (RARA) (Notophthalmus viridescens (Eastern newt)).